Here is a 154-residue protein sequence, read N- to C-terminus: Peptide methionine sulfoxide reductase MsrB (154 aa).

Residues 28–150 (DQQWREQLSE…NSVSLIFNKI (123 aa)) enclose the MsrB domain. Cysteine 67, cysteine 70, cysteine 116, and cysteine 119 together coordinate Zn(2+). Cysteine 139 functions as the Nucleophile in the catalytic mechanism.

It belongs to the MsrB Met sulfoxide reductase family. The cofactor is Zn(2+).

It catalyses the reaction L-methionyl-[protein] + [thioredoxin]-disulfide + H2O = L-methionyl-(R)-S-oxide-[protein] + [thioredoxin]-dithiol. This chain is Peptide methionine sulfoxide reductase MsrB, found in Vibrio vulnificus (strain CMCP6).